We begin with the raw amino-acid sequence, 505 residues long: Maturase K (505 aa).

This sequence belongs to the intron maturase 2 family. MatK subfamily.

It is found in the plastid. Its subcellular location is the chloroplast. Its function is as follows. Usually encoded in the trnK tRNA gene intron. Probably assists in splicing its own and other chloroplast group II introns. The polypeptide is Maturase K (Blitum bonus-henricus (Good King Henry)).